Reading from the N-terminus, the 1613-residue chain is Low-density lipoprotein receptor-related protein 6 (1613 aa).

The signal sequence occupies residues 1–19; sequence MGAVLRSLLACSFCVLLRA. The tract at residues 20-275 is beta-propeller 1; it reads APLLLYANRR…FSPMDIHAFS (256 aa). Topologically, residues 20–1370 are extracellular; sequence APLLLYANRR…YPTEEPAPQA (1351 aa). N-linked (GlcNAc...) asparagine glycans are attached at residues asparagine 42 and asparagine 81. LDL-receptor class B repeat units lie at residues 63–106, 107–149, 150–193, 194–235, and 236–277; these read GLIY…DWLG, EKLY…DPSS, GFMY…DYQE, RKLY…LFED, and TLYW…FSQQ. The N-linked (GlcNAc...) asparagine glycan is linked to asparagine 281. The EGF-like 1 domain maps to 282-324; it reads ATNPCGIDNGGCSHLCLMSPVKPFYQCACPTGVKLMENGKTCK. 3 cysteine pairs are disulfide-bonded: cysteine 286/cysteine 297, cysteine 293/cysteine 308, and cysteine 310/cysteine 323. The tract at residues 328-589 is beta-propeller 2; sequence TELLLLARRT…ATSVHRVIGS (262 aa). LDL-receptor class B repeat units lie at residues 372–414, 415–457, 458–501, 502–542, and 543–587; these read GYIY…DWVA, RNLY…DPMV, GYMY…DYDE, GTIY…TLLG, and DYVY…HRVI. N-linked (GlcNAc...) asparagine glycans are attached at residues asparagine 433 and asparagine 486. The 41-residue stretch at 588-628 folds into the EGF-like 2 domain; sequence GSNPCAEDNGGCSHLCLYRPQGLRCACPIGFELIGDMKTCI. Cystine bridges form between cysteine 592-cysteine 603, cysteine 599-cysteine 612, and cysteine 614-cysteine 627. The segment at 631–890 is beta-propeller 3; it reads EAFLLFSRRA…VFHSSRQAGW (260 aa). LDL-receptor class B repeat units follow at residues 674-716, 717-759, 760-802, 803-842, and 843-885; these read NRIY…DWLG, KNLY…DPAE, GFMY…DYAK, RRLY…TQYQ, and DYIY…FHSS. The N-linked (GlcNAc...) asparagine glycan is linked to asparagine 692. N-linked (GlcNAc...) asparagine glycans are attached at residues asparagine 859 and asparagine 865. In terms of domain architecture, EGF-like 3 spans 889–930; it reads GWNECASSNGHCSHLCLAVPVGGFVCGCPAHYSLNADNRTCS. Intrachain disulfides connect cysteine 893-cysteine 904, cysteine 900-cysteine 914, and cysteine 916-cysteine 929. Asparagine 926 is a glycosylation site (N-linked (GlcNAc...) asparagine). Positions 933-1202 are beta-propeller 4; it reads STFLLFSQKS…AVKELNLQEY (270 aa). LDL-receptor class B repeat units lie at residues 977 to 1025, 1026 to 1068, 1069 to 1113, 1114 to 1156, and 1157 to 1198; these read KQLY…DIYS, RYIY…NPEK, GYMY…DSKL, GKLF…FENW, and LYWI…KELN. In terms of domain architecture, EGF-like 4 spans 1203 to 1244; sequence RQHPCAQDNGGCSHICLVKGDGTTRCSCPMHLVLLQDELSCG. Intrachain disulfides connect cysteine 1207/cysteine 1218, cysteine 1214/cysteine 1228, cysteine 1230/cysteine 1243, cysteine 1249/cysteine 1263, cysteine 1256/cysteine 1276, cysteine 1270/cysteine 1285, cysteine 1288/cysteine 1300, cysteine 1295/cysteine 1313, cysteine 1307/cysteine 1322, cysteine 1326/cysteine 1338, cysteine 1333/cysteine 1351, and cysteine 1345/cysteine 1360. LDL-receptor class A domains are found at residues 1248–1286, 1287–1323, and 1325–1361; these read TCSP…LNCP, VCSE…KNCE, and LCLI…LDCY. The chain crosses the membrane as a helical span at residues 1371 to 1393; it reads TNTVGSVIGVIVTIFVSGTIYFI. Residues cysteine 1394 and cysteine 1399 are each lipidated (S-palmitoyl cysteine). Residues 1394 to 1613 are Cytoplasmic-facing; it reads CQRMLCPRMK…PPPSPCTDSS (220 aa). Lysine 1403 is covalently cross-linked (Glycyl lysine isopeptide (Lys-Gly) (interchain with G-Cter in ubiquitin)). Phosphoserine; by CK1 occurs at positions 1420 and 1430. Threonine 1479 carries the phosphothreonine modification. A PPPSP motif A motif is present at residues 1487–1493; the sequence is PPPSPAT. Serine 1490 is subject to Phosphoserine; by CDK14, GRK5 and GRK6. At threonine 1493 the chain carries Phosphothreonine; by CK1. Positions 1527 to 1534 match the PPPSP motif B motif; the sequence is PPTTPCST. The segment at 1556–1613 is disordered; that stretch reads YTSDVNYDSEPVPPPPTPRSQYLSAEENYESCPPSPYTERSYSHHLYPPPPSPCTDSS. The PPPSP motif C motif lies at 1568–1575; it reads PPPPTPRS. Residues 1588 to 1593 carry the PPPSP motif D motif; it reads PPSPYT. The segment covering 1602–1613 has biased composition (pro residues); sequence YPPPPSPCTDSS. A PPPSP motif E motif is present at residues 1603–1610; the sequence is PPPPSPCT.

The protein belongs to the LDLR family. Homodimer; disulfide-linked. Forms phosphorylated oligomer aggregates on Wnt-signaling. Component of the Wnt-Fzd-LRP5-LRP6 complex. Interacts (via the extracellular domain) with WNT1; the interaction is enhanced by prior formation of the Wnt/Fzd complex. Interacts (via the beta-propeller regions 3 and 4) with WNT3A. Interacts (via the beta-propeller regions 1 and 2) with WNT9B. Interacts with FZD5; the interaction forms a coreceptor complex for Wnt signaling and is inhibited by DKK1 and DRAXIN. Interacts (via beta propeller region) with DKK1; the interaction inhibits FZD5/LRP6 complex formation. Interacts with DKK2. Interacts (via the phosphorylated PPPSP motifs) with AXIN1; the interaction recruits the AXIN1/GSK3B complex to cell surface LRP6 signalosomes. Interacts (via the extracellular domain) with RSPO1; the interaction activates Wnt/beta-catenin signaling. Interacts (via the extracellular domain) with RSPO3 (via the cysteine rich domain); the interaction activates Wnt/beta-catenin signaling. Interacts (via the beta-propeller regions 1 and 2) with SOST; the interaction competes with DKK1 for binding for inhibiting beta-catenin signaling. Interacts (via the cytoplasmic domain) with CSNKIE; the interaction phosphorylates LRP6, binds AXIN1 and inhibits AXIN1/GSK3B-mediated phosphorylation of beta-catenin. Interacts with DRAXIN; the interaction inhibits Wnt signaling. Interacts with GRB10; the interaction prevents AXIN1 binding, thus negatively regulating the Wnt signaling pathway. Interacts with MESD; the interaction prevents the formation of LRP6 aggregates and targets LRP6 to the plasma membrane. Interacts with MACF1. Interacts with DAB2; the interaction involves LRP6 phosphorylation by CK2 and sequesters LRP6 towards clathrin-mediated endocytosis. Interacts with TMEM198. Interacts with CAPRIN2; the interaction promotes LRP6 phosphorylation at Ser-1490. Found in a complex with CAPRIN2, CCNY and CDK14 during G2/M stage; CAPRIN2 functions as a scaffold for the complex by binding to CCNY via its N terminus and to CDK14 via its C terminus. Interacts with LYPD6 (via NxI motif). Forms a ternary complex with DKK1 and KREM1. Interacts with KREM1 in a DKK1-dependent manner. Interacts with MDK: this interaction is calcium dependent. Interacts with LMBR1L. Interacts with GPR37; this interaction promotes LRP6 maturation. Dual phosphorylation of cytoplasmic PPPSP motifs sequentially by GSK3 and CK1 is required for AXIN1-binding, and subsequent stabilization and activation of beta-catenin via preventing GSK3-mediated phosphorylation of beta-catenin. Phosphorylated, in vitro, by GRK5/6 within and outside the PPPSP motifs. Phosphorylation at Ser-1490 by CDK14 during G2/M phase leads to regulation of the Wnt signaling pathway during the cell cycle. Phosphorylation by GSK3B is induced by RPSO1 binding and inhibited by DKK1. Phosphorylated, in vitro, by casein kinase I on Thr-1479. Post-translationally, undergoes gamma-secretase-dependent regulated intramembrane proteolysis (RIP). The extracellular domain is first released by shedding, and then, through the action of gamma-secretase, the intracellular domain (ICD) is released into the cytoplasm where it is free to bind to GSK3B and to activate canonical Wnt signaling. In terms of processing, palmitoylation on the two sites near the transmembrane domain leads to release of LRP6 from the endoplasmic reticulum. Mono-ubiquitinated which retains LRP6 in the endoplasmic reticulum. Ubiquitinated by ZNRF3, leading to its degradation by the proteasome. Post-translationally, N-glycosylation is required for cell surface location. Expressed in early embryo. Broadly expressed throughout the embryonic ectoderm and in nascent mesoderm, and in endoderm emerging from the primitive streak.

Its subcellular location is the cell membrane. It localises to the endoplasmic reticulum. The protein resides in the membrane raft. Functionally, component of the Wnt-Fzd-LRP5-LRP6 complex that triggers beta-catenin signaling through inducing aggregation of receptor-ligand complexes into ribosome-sized signalosomes. Cell-surface coreceptor of Wnt/beta-catenin signaling, which plays a pivotal role in bone formation. The Wnt-induced Fzd/LRP6 coreceptor complex recruits DVL1 polymers to the plasma membrane which, in turn, recruits the AXIN1/GSK3B-complex to the cell surface promoting the formation of signalosomes and inhibiting AXIN1/GSK3-mediated phosphorylation and destruction of beta-catenin. Required for posterior patterning of the epiblast during gastrulation. The protein is Low-density lipoprotein receptor-related protein 6 (Lrp6) of Mus musculus (Mouse).